The primary structure comprises 66 residues: Large ribosomal subunit protein uL29 (66 aa).

The protein belongs to the universal ribosomal protein uL29 family.

The protein is Large ribosomal subunit protein uL29 of Rhizobium johnstonii (strain DSM 114642 / LMG 32736 / 3841) (Rhizobium leguminosarum bv. viciae).